We begin with the raw amino-acid sequence, 166 residues long: Telethonin (166 aa).

Ser39 bears the Phosphoserine mark. The tract at residues 145-166 (VSKPGTLRRSLSRSMSQEAQRG) is disordered. Residues 156 to 166 (SRSMSQEAQRG) show a composition bias toward polar residues.

As to quaternary structure, interacts with MYOZ1, MYOZ2 and MYOZ3. Interacts with CSRP3. Interacts directly with the N-terminal Ig-like domains of 2 titin (TTN) molecules. Interacts with ANKRD2; the interaction is direct.

The protein localises to the cytoplasm. The protein resides in the myofibril. It is found in the sarcomere. In terms of biological role, muscle assembly regulating factor. Mediates the antiparallel assembly of titin (TTN) molecules at the sarcomeric Z-disk. The sequence is that of Telethonin (TCAP) from Bos taurus (Bovine).